Reading from the N-terminus, the 310-residue chain is Translocator protein BipD (310 aa).

Coiled-coil stretches lie at residues 127-171 (DPIL…LQDY) and 250-299 (DTAR…AIST).

This sequence belongs to the invasin protein D family.

It is found in the secreted. Required for invasion of epithelial cells, as well as for survival within host cells, escape from endocytic vesicles and subsequent actin-tail formation. Probably regulates the secretion of effectors BipB and BipC and their final integration into the target cell membrane. The polypeptide is Translocator protein BipD (bipD) (Burkholderia mallei (strain NCTC 10247)).